The primary structure comprises 528 residues: 4-nitrophenol 4-monooxygenase/4-nitrocatechol 2-monooxygenase, oxygenase component (528 aa).

100 to 104 (RPPAG) is a binding site for substrate. FAD contacts are provided by residues 153–155 (PMF), 159–162 (QFDR), and Thr194. 205–206 (GN) serves as a coordination point for substrate. 461–464 (TMQR) is an FAD binding site.

It belongs to the FADH(2)-utilizing monooxygenase family. As to quaternary structure, the 4-NP/4-NCA monooxygenase is composed of an oxygenase component NpcA and a reductase component NpcB. The cofactor is FAD.

It carries out the reaction 4-nitrophenol + NADH + O2 + H(+) = 4-nitrocatechol + NAD(+) + H2O. The catalysed reaction is 4-nitrocatechol + NADPH + O2 = 2-hydroxy-1,4-benzoquinone + nitrite + NADP(+) + H2O. It catalyses the reaction 4-nitrocatechol + NADH + O2 = 2-hydroxy-1,4-benzoquinone + nitrite + NAD(+) + H2O. It functions in the pathway aromatic compound metabolism. It participates in xenobiotic degradation. Its activity is regulated as follows. Inhibited by methimazole. Its function is as follows. Involved in the degradation of para-nitrophenol (4-NP). Catalyzes both the initial hydroxylation of 4-NP to produce 4-nitrocatechol (4-NCA) and the subsequent oxidative release of the nitro group from 4-NCA to produce 2-hydroxy-1,4-benzoquinone. It can also use 4-nitroresorcinol as substrate with a rate of nitrite release similar to that observed with the two physiological substrates, 4-PN and 4-NCA. The polypeptide is 4-nitrophenol 4-monooxygenase/4-nitrocatechol 2-monooxygenase, oxygenase component (npcA) (Rhodococcus opacus (Nocardia opaca)).